Reading from the N-terminus, the 500-residue chain is Xylan O-acetyltransferase 2 (500 aa).

Residues 1 to 25 (MGLPGRRNPLLSARRAAASLRRSRR) are Cytoplasmic-facing. Residues 26–43 (LPVYVAAVFFVASVLLMF) traverse the membrane as a helical; Signal-anchor for type II membrane protein segment. Residues 44–500 (RDEILYLTTA…RPPAAAGHVA (457 aa)) lie on the Lumenal side of the membrane. The segment at 84 to 116 (PVLLGHGGKPEKHHSVTERHRPKVSAKRRPNKK) is disordered. The span at 91–102 (GKPEKHHSVTER) shows a compositional bias: basic and acidic residues. The segment covering 103–116 (HRPKVSAKRRPNKK) has biased composition (basic residues). Intrachain disulfides connect C143-C194, C165-C231, C174-C472, and C388-C468. N144 and N154 each carry an N-linked (GlcNAc...) asparagine glycan. Residues 218-220 (GDS) carry the GDS motif motif. The active-site Nucleophile is the S220. N260 and N416 each carry an N-linked (GlcNAc...) asparagine glycan. D467 (proton donor) is an active-site residue. Positions 467–470 (DCIH) match the DXXH motif motif. H470 functions as the Proton acceptor in the catalytic mechanism.

It belongs to the PC-esterase family. TBL subfamily. As to expression, expressed at low levels in roots and leaves.

The protein resides in the golgi apparatus membrane. Xylan acetyltransferase required for 2-O- and 3-O-monoacetylation of xylosyl residues in xylan. Catalyzes the 2-O-acetylation of xylan, followed by nonenzymatic acetyl migration to the O-3 position, resulting in products that are monoacetylated at both O-2 and O-3 positions. This is Xylan O-acetyltransferase 2 from Oryza sativa subsp. japonica (Rice).